The primary structure comprises 109 residues: Spermidine export protein MdtI (109 aa).

4 helical membrane-spanning segments follow: residues 6–26 (WIHA…NVFL), 36–56 (VYGI…SQAV), 64–84 (AYAL…WVLF), and 88–108 (LNNK…LIKL).

Belongs to the drug/metabolite transporter (DMT) superfamily. Small multidrug resistance (SMR) (TC 2.A.7.1) family. MdtI subfamily. In terms of assembly, forms a complex with MdtJ.

Its subcellular location is the cell inner membrane. Its function is as follows. Catalyzes the excretion of spermidine. The sequence is that of Spermidine export protein MdtI from Klebsiella pneumoniae (strain 342).